A 201-amino-acid chain; its full sequence is GTP cyclohydrolase 1 (201 aa).

Zn(2+) is bound by residues Cys-90, His-93, and Cys-163.

This sequence belongs to the GTP cyclohydrolase I family. In terms of assembly, toroid-shaped homodecamer, composed of two pentamers of five dimers.

The enzyme catalyses GTP + H2O = 7,8-dihydroneopterin 3'-triphosphate + formate + H(+). The protein operates within cofactor biosynthesis; 7,8-dihydroneopterin triphosphate biosynthesis; 7,8-dihydroneopterin triphosphate from GTP: step 1/1. This Streptomyces avermitilis (strain ATCC 31267 / DSM 46492 / JCM 5070 / NBRC 14893 / NCIMB 12804 / NRRL 8165 / MA-4680) protein is GTP cyclohydrolase 1.